A 257-amino-acid chain; its full sequence is UPF0246 protein Shewana3_3143 (257 aa).

It belongs to the UPF0246 family.

This is UPF0246 protein Shewana3_3143 from Shewanella sp. (strain ANA-3).